A 310-amino-acid chain; its full sequence is Probable manganese-dependent inorganic pyrophosphatase (310 aa).

Residues His9, Asp13, Asp15, Asp75, His97, and Asp149 each coordinate Mn(2+).

It belongs to the PPase class C family. Mn(2+) serves as cofactor.

It localises to the cytoplasm. It catalyses the reaction diphosphate + H2O = 2 phosphate + H(+). In Brevibacillus brevis (strain 47 / JCM 6285 / NBRC 100599), this protein is Probable manganese-dependent inorganic pyrophosphatase.